Consider the following 436-residue polypeptide: Acetyl-CoA decarbonylase/synthase complex subunit delta 1 (436 aa).

The protein belongs to the CdhD family. Heterodimer of delta and gamma chains. The ACDS complex is made up of alpha, epsilon, beta, gamma and delta chains with a probable stoichiometry of (alpha(2)epsilon(2))(4)-beta(8)-(gamma(1)delta(1))(8) (Potential).

It functions in the pathway one-carbon metabolism; methanogenesis from acetate. Functionally, part of a complex that catalyzes the reversible cleavage of acetyl-CoA, allowing growth on acetate as sole source of carbon and energy. Probably maintains the overall quaternary structure of the ACDS complex. The chain is Acetyl-CoA decarbonylase/synthase complex subunit delta 1 (cdhD1) from Methanosarcina thermophila.